The sequence spans 192 residues: GTP cyclohydrolase 1 (192 aa).

Residues cysteine 81, histidine 84, and cysteine 153 each coordinate Zn(2+).

Belongs to the GTP cyclohydrolase I family. Toroid-shaped homodecamer, composed of two pentamers of five dimers.

The catalysed reaction is GTP + H2O = 7,8-dihydroneopterin 3'-triphosphate + formate + H(+). Its pathway is cofactor biosynthesis; 7,8-dihydroneopterin triphosphate biosynthesis; 7,8-dihydroneopterin triphosphate from GTP: step 1/1. The chain is GTP cyclohydrolase 1 from Streptococcus mutans serotype c (strain ATCC 700610 / UA159).